The primary structure comprises 1172 residues: Lysylphosphatidylglycerol biosynthesis bifunctional protein LysX (1172 aa).

The interval 1-34 (MGLHLTVPGLRRDGRGVQSNSHDTSSKTTADISR) is disordered. Residues 1–663 (MGLHLTVPGL…LLHHDGSAPD (663 aa)) are phosphatidylglycerol lysyltransferase. Residues 17–31 (VQSNSHDTSSKTTAD) are compositionally biased toward polar residues. A run of 7 helical transmembrane segments spans residues 80–100 (VPAAAGWTVGVIATLSLLASV), 122–142 (FPDTNFAWSFVLALLAAALTA), 146–166 (IAWLVLLANMVLAAVVNAAEI), 177–197 (FGENLGFAVHVVAIVVLVLGY), 214–234 (AVWLAGAVVGIVASWGLVELF), 272–292 (AIFGLFGAFALIGAAIVLFLS), and 612–632 (VIPRVGVASVIAEGFLVLPFS). A lysine--tRNA ligase region spans residues 664–1172 (VSGLRQVGLT…TLPFPLAKPH (509 aa)). The OB DNA-binding region spans 726–804 (VSVSGRIMRI…SLIVSGWRLI (79 aa)). Mg(2+)-binding residues include D1084 and E1091.

This sequence in the N-terminal section; belongs to the LPG synthetase family. In the C-terminal section; belongs to the class-II aminoacyl-tRNA synthetase family. It depends on Mg(2+) as a cofactor.

It localises to the cell membrane. It catalyses the reaction tRNA(Lys) + L-lysine + ATP = L-lysyl-tRNA(Lys) + AMP + diphosphate. The enzyme catalyses L-lysyl-tRNA(Lys) + a 1,2-diacyl-sn-glycero-3-phospho-(1'-sn-glycerol) = a 1,2-diacyl-sn-glycero-3-phospho-1'-(3'-O-L-lysyl)-sn-glycerol + tRNA(Lys). Catalyzes the production of L-lysyl-tRNA(Lys)transfer and the transfer of a lysyl group from L-lysyl-tRNA(Lys) to membrane-bound phosphatidylglycerol (PG), which produces lysylphosphatidylglycerol (LPG), one of the components of the bacterial membrane with a positive net charge. LPG synthesis contributes to the resistance to cationic antimicrobial peptides (CAMPs) and likely protects M.tuberculosis against the CAMPs produced by competiting microorganisms (bacteriocins). In fact, the modification of anionic phosphatidylglycerol with positively charged L-lysine results in repulsion of the peptides. In Mycobacterium tuberculosis (strain F11), this protein is Lysylphosphatidylglycerol biosynthesis bifunctional protein LysX (lysX).